The sequence spans 361 residues: 3-dehydroquinate synthase (361 aa).

NAD(+) contacts are provided by residues 71–76, 105–109, 129–130, Lys-142, Lys-151, and 169–172; these read DGEQNK, GVIGD, TT, and CLNT. Glu-184, His-247, and His-264 together coordinate Zn(2+).

This sequence belongs to the sugar phosphate cyclases superfamily. Dehydroquinate synthase family. Co(2+) is required as a cofactor. The cofactor is Zn(2+). NAD(+) serves as cofactor.

It localises to the cytoplasm. It carries out the reaction 7-phospho-2-dehydro-3-deoxy-D-arabino-heptonate = 3-dehydroquinate + phosphate. It functions in the pathway metabolic intermediate biosynthesis; chorismate biosynthesis; chorismate from D-erythrose 4-phosphate and phosphoenolpyruvate: step 2/7. Its function is as follows. Catalyzes the conversion of 3-deoxy-D-arabino-heptulosonate 7-phosphate (DAHP) to dehydroquinate (DHQ). The protein is 3-dehydroquinate synthase of Sodalis glossinidius (strain morsitans).